Consider the following 1140-residue polypeptide: DNA damage-binding protein 1 (1140 aa).

The protein belongs to the DDB1 family. As to quaternary structure, component of the UV-DDB complex which includes DDB1 and DDB2; the heterodimer dimerizes to give rise to a heterotetramer when bound to damaged DNA. The UV-DDB complex interacts with monoubiquitinated histone H2A and binds to XPC via the DDB2 subunit. Component of numerous DCX (DDB1-CUL4-X-box) E3 ubiquitin-protein ligase complexes which consist of a core of DDB1, CUL4A or CUL4B and RBX1. DDB1 may recruit specific substrate targeting subunits to the DCX complex. These substrate targeting subunits are generally known as DCAF (DDB1- and CUL4-associated factor) or CDW (CUL4-DDB1-associated WD40-repeat) proteins. Interacts with Fbw5 and gig. May interact with ohgt.

It is found in the cytoplasm. The protein localises to the nucleus. It functions in the pathway protein modification; protein ubiquitination. Protein, which is both involved in DNA repair and protein ubiquitination, as part of the UV-DDB complex and DCX (DDB1-CUL4-X-box) complexes, respectively. Core component of the UV-DDB complex (UV-damaged DNA-binding protein complex), a complex that recognizes UV-induced DNA damage and recruit proteins of the nucleotide excision repair pathway (the NER pathway) to initiate DNA repair. The UV-DDB complex preferentially binds to cyclobutane pyrimidine dimers (CPD), 6-4 photoproducts (6-4 PP), apurinic sites and short mismatches. Also functions as a component of numerous distinct DCX (DDB1-CUL4-X-box) E3 ubiquitin-protein ligase complexes which mediate the ubiquitination and subsequent proteasomal degradation of target proteins. The functional specificity of the DCX E3 ubiquitin-protein ligase complex is determined by the variable substrate recognition component recruited by DDB1. Required for degradation of gig. Required for genomic stability in the face of endogenous DNA lesions and for the response to MMS-induced DNA damage. Required for normal wing development. The sequence is that of DNA damage-binding protein 1 (pic) from Drosophila melanogaster (Fruit fly).